A 236-amino-acid chain; its full sequence is MSLFITFEGPEGSGKSTQARYLKDYLQQAGYPVILTREPGGTPISDAVRRLVLDGQWTAMEPTTETLLFAAARAQLVGEVILPYLKLGGIVLCDRYADSTFAHQGYGLGRNLTELREITRFATGGLQPDLTFFLDLPVEQGLQRKRKQRDDFRESSQLALPLPHLPQPSPSQNEHWNRLDAREIAYHERVRSGYLEMIAADPQRWQVFDAGIERESLTEQLLLAVQPHLTTIKTLS.

9-16 (GPEGSGKS) contacts ATP.

It belongs to the thymidylate kinase family.

The catalysed reaction is dTMP + ATP = dTDP + ADP. In terms of biological role, phosphorylation of dTMP to form dTDP in both de novo and salvage pathways of dTTP synthesis. In Herpetosiphon aurantiacus (strain ATCC 23779 / DSM 785 / 114-95), this protein is Thymidylate kinase.